Here is a 243-residue protein sequence, read N- to C-terminus: Probable septum site-determining protein MinC (243 aa).

The protein belongs to the MinC family. As to quaternary structure, interacts with MinD and FtsZ.

Functionally, cell division inhibitor that blocks the formation of polar Z ring septums. Rapidly oscillates between the poles of the cell to destabilize FtsZ filaments that have formed before they mature into polar Z rings. Prevents FtsZ polymerization. The protein is Probable septum site-determining protein MinC of Wigglesworthia glossinidia brevipalpis.